The sequence spans 178 residues: MQSADNLIWIDLEMTGLDVDSCKITEIAAIITDKDLNIIAEAEPIAIYQPDEVLANMNEWCIKTHTETGLTQRVKDSKISTEAAEQQILEFIRKFVPYQSSPLCGNSIWQDRRFLAKYMPNIDEYCHYRMLDVTTLKLLNQYWGDGKSFEKKNTHKALDDIRESIAELKFYRQKLLSI.

The region spanning 7–168 (LIWIDLEMTG…DDIRESIAEL (162 aa)) is the Exonuclease domain. Tyr128 is an active-site residue.

The protein belongs to the oligoribonuclease family.

It localises to the cytoplasm. In terms of biological role, 3'-to-5' exoribonuclease specific for small oligoribonucleotides. This is Oligoribonuclease from Francisella tularensis subsp. tularensis (strain FSC 198).